Here is an 89-residue protein sequence, read N- to C-terminus: Small ribosomal subunit protein uS15 (89 aa).

Belongs to the universal ribosomal protein uS15 family. Part of the 30S ribosomal subunit. Forms a bridge to the 50S subunit in the 70S ribosome, contacting the 23S rRNA.

One of the primary rRNA binding proteins, it binds directly to 16S rRNA where it helps nucleate assembly of the platform of the 30S subunit by binding and bridging several RNA helices of the 16S rRNA. Its function is as follows. Forms an intersubunit bridge (bridge B4) with the 23S rRNA of the 50S subunit in the ribosome. The protein is Small ribosomal subunit protein uS15 of Roseobacter denitrificans (strain ATCC 33942 / OCh 114) (Erythrobacter sp. (strain OCh 114)).